Here is a 320-residue protein sequence, read N- to C-terminus: Nicotianamine synthase 3 (320 aa).

Belongs to the nicotianamine synthase (NAS)-like family. In shoots.

The enzyme catalyses 3 S-adenosyl-L-methionine = nicotianamine + 3 S-methyl-5'-thioadenosine + 3 H(+). Synthesizes nicotianamine, a polyamine which serves as a sensor for the physiological iron status within the plant, and/or might be involved in the transport of iron. The sequence is that of Nicotianamine synthase 3 (NAS3) from Arabidopsis thaliana (Mouse-ear cress).